A 382-amino-acid polypeptide reads, in one-letter code: Intermediate transcription factor 3 large subunit (382 aa).

Belongs to the poxviruses A23 family. In terms of assembly, heterodimer of a 45 kDa and a 32 kDa subunit.

In terms of biological role, acts with RNA polymerase to initiate transcription from intermediate gene promoters. This is Intermediate transcription factor 3 large subunit (VITF3L) from Camelus.